A 638-amino-acid polypeptide reads, in one-letter code: Threonine--tRNA ligase (638 aa).

The region spanning 1–61 is the TGS domain; the sequence is MPEITLPDGS…DNDSKVVIIT (61 aa). The interval 242-533 is catalytic; sequence DHRKLGKKHS…LIEQYEAKFP (292 aa). Zn(2+) is bound by residues cysteine 333, histidine 384, and histidine 510.

This sequence belongs to the class-II aminoacyl-tRNA synthetase family. In terms of assembly, homodimer. It depends on Zn(2+) as a cofactor.

The protein localises to the cytoplasm. It catalyses the reaction tRNA(Thr) + L-threonine + ATP = L-threonyl-tRNA(Thr) + AMP + diphosphate + H(+). Functionally, catalyzes the attachment of threonine to tRNA(Thr) in a two-step reaction: L-threonine is first activated by ATP to form Thr-AMP and then transferred to the acceptor end of tRNA(Thr). Also edits incorrectly charged L-seryl-tRNA(Thr). This Prochlorococcus marinus subsp. pastoris (strain CCMP1986 / NIES-2087 / MED4) protein is Threonine--tRNA ligase.